The chain runs to 464 residues: Chromosomal replication initiator protein DnaA (464 aa).

The domain I, interacts with DnaA modulators stretch occupies residues 1 to 82 (MSLSLWQQCL…LLRFEVGSKP (82 aa)). The interval 82-127 (PPQMAVLQPASQHASEAPSQAAVARPRPSRPSWDNAPVQPELSYRS) is domain II. The disordered stretch occupies residues 91 to 118 (ASQHASEAPSQAAVARPRPSRPSWDNAP). Residues 128-344 (NVNPKHNFDN…GALNRVIANA (217 aa)) form a domain III, AAA+ region region. Residues Gly-172, Gly-174, Lys-175, and Thr-176 each contribute to the ATP site. A domain IV, binds dsDNA region spans residues 345–464 (NFTGRAITID…FSNLIRTLSS (120 aa)).

It belongs to the DnaA family. In terms of assembly, oligomerizes as a right-handed, spiral filament on DNA at oriC.

The protein localises to the cytoplasm. In terms of biological role, plays an essential role in the initiation and regulation of chromosomal replication. ATP-DnaA binds to the origin of replication (oriC) to initiate formation of the DNA replication initiation complex once per cell cycle. Binds the DnaA box (a 9 base pair repeat at the origin) and separates the double-stranded (ds)DNA. Forms a right-handed helical filament on oriC DNA; dsDNA binds to the exterior of the filament while single-stranded (ss)DNA is stabiized in the filament's interior. The ATP-DnaA-oriC complex binds and stabilizes one strand of the AT-rich DNA unwinding element (DUE), permitting loading of DNA polymerase. After initiation quickly degrades to an ADP-DnaA complex that is not apt for DNA replication. Binds acidic phospholipids. This Sodalis glossinidius (strain morsitans) protein is Chromosomal replication initiator protein DnaA.